A 142-amino-acid chain; its full sequence is Hemoglobin subunit alpha-3 (142 aa).

Positions 2 to 142 (VLSAADKSNV…VSTVLTSKYR (141 aa)) constitute a Globin domain. O2 is bound at residue His-59. A heme b-binding site is contributed by His-88.

This sequence belongs to the globin family. As to quaternary structure, heterotetramer of two alpha chains and two beta chains. As to expression, red blood cells.

Its function is as follows. Involved in oxygen transport from the lung to the various peripheral tissues. The sequence is that of Hemoglobin subunit alpha-3 from Bubalus bubalis (Domestic water buffalo).